The sequence spans 312 residues: Large ribosomal subunit protein uL10 (312 aa).

A Glycyl lysine isopeptide (Lys-Gly) (interchain with G-Cter in ubiquitin) cross-link involves residue Lys14. Ser68 carries the post-translational modification Phosphoserine. Residues Lys97 and Lys144 each participate in a glycyl lysine isopeptide (Lys-Gly) (interchain with G-Cter in ubiquitin) cross-link. The tract at residues 199–230 (SSILDITDEELVSHFVSAVSTIASISLAIGYP) is interaction with P1A-P2B. The tract at residues 231 to 258 (TLPSVGHTLINNYKDLLAVAIAASYHYP) is interaction with P1B-P2A. The span at 278 to 293 (PAATSAASGDAAPAEE) shows a compositional bias: low complexity. The interval 278 to 312 (PAATSAASGDAAPAEEAAAEEEEESDDDMGFGLFD) is disordered. Acidic residues predominate over residues 294–306 (AAAEEEEESDDDM). Ser302 is subject to Phosphoserine; by CK2.

The protein belongs to the universal ribosomal protein uL10 family. In terms of assembly, component of the large ribosomal subunit (LSU). Mature yeast ribosomes consist of a small (40S) and a large (60S) subunit. The 40S small subunit contains 1 molecule of ribosomal RNA (18S rRNA) and 33 different proteins (encoded by 57 genes). The large 60S subunit contains 3 rRNA molecules (25S, 5.8S and 5S rRNA) and 46 different proteins (encoded by 81 genes). The 5 acidic ribosomal P-proteins form the stalk structure of the 60S subunit. They are organized as a pentameric complex in which uL10/P0 interacts with 2 heterodimers, P1A-P2B and P1B-P2A. uL10 directly interacts with 28S rRNA. uL10 interacts with YFL034W.

The protein localises to the cytoplasm. In terms of biological role, component of the ribosome, a large ribonucleoprotein complex responsible for the synthesis of proteins in the cell. The small ribosomal subunit (SSU) binds messenger RNAs (mRNAs) and translates the encoded message by selecting cognate aminoacyl-transfer RNA (tRNA) molecules. The large subunit (LSU) contains the ribosomal catalytic site termed the peptidyl transferase center (PTC), which catalyzes the formation of peptide bonds, thereby polymerizing the amino acids delivered by tRNAs into a polypeptide chain. The nascent polypeptides leave the ribosome through a tunnel in the LSU and interact with protein factors that function in enzymatic processing, targeting, and the membrane insertion of nascent chains at the exit of the ribosomal tunnel. uL10 forms part of the P stalk that participates in recruiting G proteins to the ribosome. The sequence is that of Large ribosomal subunit protein uL10 from Saccharomyces cerevisiae (strain ATCC 204508 / S288c) (Baker's yeast).